Here is a 185-residue protein sequence, read N- to C-terminus: Probable chorismate pyruvate-lyase (185 aa).

Substrate is bound by residues arginine 75, leucine 113, and glutamate 170.

Belongs to the UbiC family.

It is found in the cytoplasm. It carries out the reaction chorismate = 4-hydroxybenzoate + pyruvate. It functions in the pathway cofactor biosynthesis; ubiquinone biosynthesis. Removes the pyruvyl group from chorismate, with concomitant aromatization of the ring, to provide 4-hydroxybenzoate (4HB) for the ubiquinone pathway. This Coxiella burnetii (strain RSA 493 / Nine Mile phase I) protein is Probable chorismate pyruvate-lyase.